The following is a 1097-amino-acid chain: MDFLRLYLPGLHQALRGALDSLGTFVSYLLGDAVPTVEREAQAAEELGVVAVGKTGKIVEEEAQEDLEGLRGSQNEGAGRLRGPGDDRRHEVGSSAVEQTWGWGDGSSHGSQAERQDSGAGETAKAARCQEPSAHLEARKKSKAGSGACQDRSGQAQERQESHEQEVNREERLRSWEQEEEEEEVRAREPGMARGAESEWTWHGETEGKAGAVGPKAAGDNREMEQGVREADAGETEEPGAEGAGKGEEVVVVEKACESTRAWGTWGPGAEPEDWGILGREEARTTPGREEARAILDGEEARTISGGEEAETASGGEEAETASGGEEAGTASGGEEAGIASGGEAGTASGGEEAGTASGGEEAGTASGGDEAWTTSGKEEADLLGVRQTEYGAVPGERLLEATGKVWVLEEEGDEEREAEVSPFPKQPQVLGTERTEEAAESQTAGREAVGGQEAGESFEGQVDLRGKEAEMRQDLGIRADRARMEELVQAEEAQEERGSSRDPVAELPSDGEAEGTADLEATPEARPEEELTGEESEAAQTSCGLLGVEWGGLTHSVTKGQGPELMGGAQTPTKQPEEREAGEVELMGVLALSKEEQERSLEAGPRHAGSVKPEASEAFPGAWENRTRKDMERGNTQEDAADGEQREEEETAGGQTLAAEAEGDRESELSEVPEAGGEGLTTQDAGCGTEEGEASVSENQELDGSTGADAGPCPSLGEAYARETEDEEAEADRTSRRGWRLQAVAVGLPDREDAQTGSVAAGIMGGDVVPHISAAGAGEALEGVLGQGWDSKEKEEAAAGEHAGGQEFGLEGSAEEEVTGRGSQVEAFESREGGPWGGRVEAEESAGAEDSCGLDPAGSQTARAEGMGAMVEAGGLLEKWTLLEEEAVGWQEREQREDSEGRCGDYHPEGEAPRLLDAEGLMVTGGRRAEAKETEPESLEHVRGQEEQPTHQAPAEAAPESVGEAETAEAMGSARGGAANSWSEAPLPGSLLDVSVPRSRVHLSRSSSQRRSRPSFRRTPAWEQQEEPPAPNPPEEELSAPEQRPLQLEEPLEPSPLRHDGTPVPARRRPLGHGFGLAHPGMMQELQARLGRPKPQ.

Disordered stretches follow at residues 64 to 249 (QEDL…KGEE), 262 to 376 (AWGT…WTTS), 410 to 739 (EEEG…SRRG), 789 to 866 (GWDS…ARAE), and 889 to 1097 (VGWQ…PKPQ). Basic and acidic residues-rich tracts occupy residues 83 to 92 (GPGDDRRHEV), 158 to 177 (ERQESHEQEVNREERLRSWE), and 185 to 208 (VRAREPGMARGAESEWTWHGETEG). A compositionally biased stretch (low complexity) spans 209–218 (KAGAVGPKAA). 2 stretches are compositionally biased toward basic and acidic residues: residues 219 to 232 (GDNREMEQGVREAD) and 279 to 302 (GREEARTTPGREEARAILDGEEAR). Residues 312 to 330 (TASGGEEAETASGGEEAGT) show a composition bias toward low complexity. The span at 331 to 362 (ASGGEEAGIASGGEAGTASGGEEAGTASGGEE) shows a compositional bias: gly residues. Serine 458 carries the post-translational modification Phosphoserine. Composition is skewed to basic and acidic residues over residues 463–487 (VDLRGKEAEMRQDLGIRADRARMEE) and 496–505 (EERGSSRDPV). Serine 510 is subject to Phosphoserine. A Phosphothreonine modification is found at threonine 572. Serine 594 is subject to Phosphoserine. Composition is skewed to basic and acidic residues over residues 594 to 606 (SKEEQERSLEAGP) and 626 to 637 (NRTRKDMERGNT). A compositionally biased stretch (acidic residues) spans 640–652 (DAADGEQREEEET). Composition is skewed to basic and acidic residues over residues 791 to 800 (DSKEKEEAAA), 892 to 918 (QEREQREDSEGRCGDYHPEGEAPRLLD), and 928 to 950 (RRAEAKETEPESLEHVRGQEEQP). A compositionally biased stretch (basic residues) spans 1000 to 1017 (SRVHLSRSSSQRRSRPSF). The span at 1041–1050 (APEQRPLQLE) shows a compositional bias: low complexity.

As to quaternary structure, homodimer. In terms of processing, there are 2 forms in macrophages, the membrane-binding proteins 200 kDa (MBP 200) and 235 kDa (MBP 235), that can be reduced into a single active ligand-binding species with intermediate mobility (MBP 200R). Expressed in peripheral blood leukocytes &gt; bone marrow = spleen &gt; lymph node, and only faintly visible in appendix and thymus. Expressed in the brain, heart, kidney, liver, lung, pancreas, and placenta. Expressed primarily by reticuloendothelial cells: monocytes, macrophages, and endothelial cells. Expressed in atherosclerotic lesion foam cells.

The protein resides in the cell membrane. Macrophage receptor that binds to the apolipoprotein B48 (APOB) of dietary triglyceride (TG)-rich lipoproteins (TRL) or to a like domain of APOB in hypertriglyceridemic very low density lipoprotein (HTG-VLDL). Binds and internalizes TRL when out of the context of the macrophage. May provide essential lipids to reticuloendothelial cells. Could also be involved in foam cell formation with elevated TRL and remnant lipoprotein (RLP). Mediates the rapid high-affinity uptake of chylomicrons (CM), HTG-VLDL, and trypsinized (tryp) VLDL devoid of APOE in vitro in macrophages. This Homo sapiens (Human) protein is Apolipoprotein B receptor.